Consider the following 499-residue polypeptide: Low-affinity inorganic phosphate transporter PitA (499 aa).

At methionine 1–leucine 4 the chain is on the periplasmic side. The chain crosses the membrane as a helical span at residues phenylalanine 5–phenylalanine 25. At tyrosine 26–glutamine 51 the chain is on the cytoplasmic side. A helical membrane pass occupies residues leucine 52–valine 72. Residues alanine 73–glycine 93 are Periplasmic-facing. A helical membrane pass occupies residues leucine 94 to phenylalanine 114. Residues glycine 115–threonine 123 lie on the Cytoplasmic side of the membrane. A helical transmembrane segment spans residues leucine 124–valine 144. The Periplasmic segment spans residues aspartate 145–serine 154. Residues isoleucine 155–phenylalanine 175 form a helical membrane-spanning segment. Residues leucine 176–proline 206 are Cytoplasmic-facing. Residues proline 207–alanine 227 form a helical membrane-spanning segment. Over asparagine 228–lysine 232 the chain is Periplasmic. The chain crosses the membrane as a helical span at residues glycine 233 to methionine 253. Topologically, residues asparagine 254–tyrosine 381 are cytoplasmic. The helical transmembrane segment at alanine 382 to tryptophan 402 threads the bilayer. At arginine 403–threonine 429 the chain is on the periplasmic side. A helical membrane pass occupies residues alanine 430 to leucine 450. The Cytoplasmic portion of the chain corresponds to serine 451–serine 472. A helical membrane pass occupies residues isoleucine 473 to tryptophan 493. At leucine 494–leucine 499 the chain is on the periplasmic side.

Belongs to the inorganic phosphate transporter (PiT) (TC 2.A.20) family. Pit subfamily.

The protein resides in the cell inner membrane. The enzyme catalyses phosphate(in) + H(+)(in) = phosphate(out) + H(+)(out). In terms of biological role, low-affinity inorganic phosphate transporter. This Escherichia coli O157:H7 protein is Low-affinity inorganic phosphate transporter PitA (pitA).